The chain runs to 459 residues: uncharacterized protein (459 aa).

Residues 13–145 (TESAIKRVVG…DALSKGRELK (133 aa)) enclose the B12-binding domain. The Radical SAM core domain occupies 188–402 (ADGVPFGVVM…MNWRKYTTID (215 aa)). 3 residues coordinate [4Fe-4S] cluster: cysteine 202, cysteine 206, and cysteine 209.

The protein belongs to the methyltransferase superfamily. [4Fe-4S] cluster serves as cofactor.

This is an uncharacterized protein from Pyrococcus horikoshii (strain ATCC 700860 / DSM 12428 / JCM 9974 / NBRC 100139 / OT-3).